The chain runs to 575 residues: MILLQTSLIWVVYAVVVVVLFAVASVFIYVYQSPRDRSPSVTLTCIVAITSLLATILLLPVDVALVSSTVSSSVGQRKDWATPEVVDRITFSLTLVYYILYSLDILLCLLVVPFVYFWYEEYDEVAAQTGEQSSGQRFWGASKYTLSFIAILIILFLVGVFVPISRANGGNGLDPFKSLLGENRGERALTFALGLLITIGMYVYALHTSTGLAVLPIRLIKGGPRLSNAGSWNATFTVQLDSNRERRRQLEGRCGGNFDHLSSKDRRELDALIREERTLIRRQRLAQEADGKGNALLPRMWFRLEAFFRPFRRLVGLILLLLVLLIWVSMILTASDKAKNSICKRHCGYVLGHINIFNPINEIFVQSAKLFPIDYAIFTMLVLLLFFGTVVGIATVGIRFLWISIFRIRLGHTSPQALLVMTAILMLSILALNYSISMIVAPQYATFGPQTFCDRLSGSSVLPELQCVVKRCSEAFGSDAAKKVCTPSVASTVLNRVTVSFPFFGAIFFWSQFAFIGVYLLALITSLLRSPKLDEQQLDEDAEEAEEEALLSGSRRNMDDRWQSIVGRASRSEDT.

A run of 5 helical transmembrane segments spans residues 8-28 (LIWV…SVFI), 46-66 (IVAI…VALV), 95-115 (LVYY…VPFV), 144-164 (YTLS…FVPI), and 188-208 (ALTF…ALHT). A glycan (N-linked (GlcNAc...) asparagine) is linked at asparagine 233. The next 4 membrane-spanning stretches (helical) occupy residues 314-334 (LVGL…ILTA), 376-396 (AIFT…IATV), 420-440 (VMTA…SMIV), and 504-524 (FGAI…LALI). Residues 537 to 549 (QLDEDAEEAEEEA) are compositionally biased toward acidic residues. Positions 537–556 (QLDEDAEEAEEEALLSGSRR) are disordered.

Belongs to the LIMR family. LMBRD1 subfamily.

The protein resides in the lysosome membrane. Functionally, probable lysosomal cobalamin transporter. Required to export cobalamin from lysosomes allowing its conversion to cofactors. In Emericella nidulans (strain FGSC A4 / ATCC 38163 / CBS 112.46 / NRRL 194 / M139) (Aspergillus nidulans), this protein is Probable lysosomal cobalamin transporter.